A 340-amino-acid polypeptide reads, in one-letter code: Coproporphyrin III ferrochelatase (340 aa).

Fe-coproporphyrin III is bound by residues Ser-52 and Tyr-121. Fe(2+) contacts are provided by His-181 and Glu-264.

Belongs to the ferrochelatase family.

It localises to the cytoplasm. It catalyses the reaction Fe-coproporphyrin III + 2 H(+) = coproporphyrin III + Fe(2+). It functions in the pathway porphyrin-containing compound metabolism; protoheme biosynthesis. In terms of biological role, involved in coproporphyrin-dependent heme b biosynthesis. Catalyzes the insertion of ferrous iron into coproporphyrin III to form Fe-coproporphyrin III. This chain is Coproporphyrin III ferrochelatase, found in Mycolicibacterium smegmatis (strain ATCC 700084 / mc(2)155) (Mycobacterium smegmatis).